Here is a 524-residue protein sequence, read N- to C-terminus: Cytokinin dehydrogenase 7 (524 aa).

An N-terminal signal peptide occupies residues 1–22 (MAARCSIAFMIMASCLSVVVSG). Asn42 is a glycosylation site (N-linked (GlcNAc...) asparagine). The region spanning 55–233 (VAAAPEAVLH…TRARIGLMPA (179 aa)) is the FAD-binding PCMH-type domain. Residues Gly91 and Gly93 each coordinate FAD. His94 bears the Pros-8alpha-FAD histidine mark. FAD is bound by residues Ser95 and Gln99. A glycan (N-linked (GlcNAc...) asparagine) is linked at Asn121. Positions 157, 162, 168, 172, and 223 each coordinate FAD. Residues Asn277 and Asn320 are each glycosylated (N-linked (GlcNAc...) asparagine). FAD is bound by residues Tyr472, Ser507, and Gln510.

This sequence belongs to the oxygen-dependent FAD-linked oxidoreductase family. Monomer. The cofactor is FAD.

The protein resides in the secreted. Its subcellular location is the extracellular space. It catalyses the reaction N(6)-dimethylallyladenine + A + H2O = 3-methyl-2-butenal + adenine + AH2. Its function is as follows. Catalyzes the oxidation of cytokinins, a family of N(6)-substituted adenine derivatives that are plant hormones, where the substituent is an isopentenyl group. This chain is Cytokinin dehydrogenase 7 (CKX7), found in Oryza sativa subsp. japonica (Rice).